The following is a 270-amino-acid chain: Formamidopyrimidine-DNA glycosylase (270 aa).

Pro-2 serves as the catalytic Schiff-base intermediate with DNA. Catalysis depends on Glu-3, which acts as the Proton donor. Catalysis depends on Lys-58, which acts as the Proton donor; for beta-elimination activity. His-91, Arg-110, and Arg-151 together coordinate DNA. An FPG-type zinc finger spans residues 236–270; that stretch reads FVYGRGGQPCKVCGTALREVKLGQRASVYCPRCQR. Arg-260 (proton donor; for delta-elimination activity) is an active-site residue.

This sequence belongs to the FPG family. In terms of assembly, monomer. Zn(2+) is required as a cofactor.

It carries out the reaction Hydrolysis of DNA containing ring-opened 7-methylguanine residues, releasing 2,6-diamino-4-hydroxy-5-(N-methyl)formamidopyrimidine.. The enzyme catalyses 2'-deoxyribonucleotide-(2'-deoxyribose 5'-phosphate)-2'-deoxyribonucleotide-DNA = a 3'-end 2'-deoxyribonucleotide-(2,3-dehydro-2,3-deoxyribose 5'-phosphate)-DNA + a 5'-end 5'-phospho-2'-deoxyribonucleoside-DNA + H(+). Functionally, involved in base excision repair of DNA damaged by oxidation or by mutagenic agents. Acts as a DNA glycosylase that recognizes and removes damaged bases. Has a preference for oxidized purines, such as 7,8-dihydro-8-oxoguanine (8-oxoG). Has AP (apurinic/apyrimidinic) lyase activity and introduces nicks in the DNA strand. Cleaves the DNA backbone by beta-delta elimination to generate a single-strand break at the site of the removed base with both 3'- and 5'-phosphates. This Pseudomonas putida (strain GB-1) protein is Formamidopyrimidine-DNA glycosylase.